A 167-amino-acid polypeptide reads, in one-letter code: Novel acetylcholine receptor chaperone (167 aa).

Topologically, residues 1–5 are cytoplasmic; that stretch reads MASPR. A helical transmembrane segment spans residues 6–26; that stretch reads TITIMALSVALGLFFVFMGTI. Residues 27–61 lie on the Lumenal side of the membrane; sequence KLTPRLSKDAYSEMKRAYKSYVRALPLLKKMGINS. Residues 43–54 are interaction with NGFR; the sequence is AYKSYVRALPLL. A helical transmembrane segment spans residues 62-82; sequence ILLRKSIGALEVACGIVMTLV. Residues 83-88 lie on the Cytoplasmic side of the membrane; that stretch reads PGRPKD. The chain crosses the membrane as a helical span at residues 89-109; it reads VANFFLLLLVLAVLFFHQLVG. Over 110 to 114 the chain is Lumenal; it reads DPLKR. Residues 115–132 traverse the membrane as a helical segment; it reads YAHALVFGILLTCRLLIA. Over 133–167 the chain is Cytoplasmic; that stretch reads RKPEDRSSEKKALPESAEEQPSLYEKAPQGKVKVS. Positions 135 to 145 are enriched in basic and acidic residues; that stretch reads PEDRSSEKKAL. The segment at 135 to 167 is disordered; sequence PEDRSSEKKALPESAEEQPSLYEKAPQGKVKVS.

This sequence belongs to the DoxX family. May interact with NGFR. Interacts with RPN1, RPN2 and CANX. As to expression, brain (at protein level). Expressed in the spinal cord dorsal horn (at protein level).

Its subcellular location is the peroxisome membrane. The protein localises to the cytoplasmic vesicle. It localises to the endoplasmic reticulum membrane. Its function is as follows. Molecular chaperone which mediates the proper assembly and functional expression of the nicotinic acetylcholine receptors (nAChRs) throughout the brain. Essential for the proper folding, assembly, function and surface trafficking of alpha-7 (CHRNA7), alpha-4-beta-2, alpha-3-beta-2 and alpha-3-beta-4 receptors. Stably associates with ribophorin-1 (RPN1) and ribophorin-2 (RPN2) (components of the oligosaccharyl transferase (OST) complex) and with calnexin (CANX), both of which are critical for NACHO-mediated effects on CHRNA7 assembly and function. Facilitates the proper folding and assembly of alpha-6-beta-2 and alpha-6-beta-2-beta-3 receptors and acts at early stages of the nAChRs subunit assembly. Promotes the expression of the alpha-4(2):beta-2(3) stoichiometric form over the alpha-4(3):beta-2(2) form. In Mus musculus (Mouse), this protein is Novel acetylcholine receptor chaperone.